A 467-amino-acid chain; its full sequence is Acyl-lipid (8-3)-desaturase B (467 aa).

The Cytochrome b5 heme-binding domain maps to 12–89; that stretch reads LKLYTWDEVS…IKQYEIGYIS (78 aa). Heme contacts are provided by His-47 and His-70. 2 helical membrane-spanning segments follow: residues 123 to 143 and 152 to 172; these read VSVG…VTYY and FWLN…FGLH. Positions 175–179 match the Histidine box-1 motif; that stretch reads HDACH. A helical transmembrane segment spans residues 187–207; it reads MTWKILGATFDLFAGASFYAW. Positions 211-216 match the Histidine box-2 motif; it reads HVIGHH. The next 2 membrane-spanning stretches (helical) occupy residues 293–313 and 317–337; these read AIFI…PLIY and FSHL…YLAI. The short motif at 400-404 is the Histidine box-3 element; that stretch reads QVIHH.

Belongs to the fatty acid desaturase type 1 family. Fe(2+) is required as a cofactor.

It is found in the membrane. It carries out the reaction an (8Z,11Z,14Z)-icosatrienoyl-containing glycerolipid + 2 Fe(II)-[cytochrome b5] + O2 + 2 H(+) = (5Z,8Z,11Z,14Z)-eicosatetraenoyl-containing glycerolipid + 2 Fe(III)-[cytochrome b5] + 2 H2O. It catalyses the reaction an (8Z,11Z,14Z,17Z)-eicosatetraenoyl-containing glycerolipid + 2 Fe(II)-[cytochrome b5] + O2 + 2 H(+) = a (5Z,8Z,11Z,14Z,17Z)-eicosapentaenoyl-containing glycerolipid + 2 Fe(III)-[cytochrome b5] + 2 H2O. Its function is as follows. Fatty acid desaturase that introduces a cis double bond at the 5-position in 18-carbon polyunsaturated fatty acids. The chain is Acyl-lipid (8-3)-desaturase B (fadB) from Dictyostelium discoideum (Social amoeba).